We begin with the raw amino-acid sequence, 270 residues long: GSGSAATDKFKAERATADTSPERLAAIAKDALGALNDVILKHGVTYPEYRVFKQWLIDVGEGGEWPLFLDVFIEHSVEEVLARSRKGTMGSIEGPYYIENSPELPSKCTLPMREEDEKITPLVFSGQVTDLDGNGLAGAKVELWHADNDGYYSQFAPHLPEWNLRGTIIADEEGRYEITTIQPAPYQIPTDGPTGQFIEAQNGHPWRPAHLHLIVSAPGKESVTTQLYFKGGEWIDSDVASATKPELILDPKTGDDGKNYVTYNFVLDPA.

Fe cation-binding residues include Y152, Y186, H210, and H212.

It belongs to the intradiol ring-cleavage dioxygenase family. The cofactor is Fe(3+).

The enzyme catalyses catechol + O2 = cis,cis-muconate + 2 H(+). This Rhodococcus opacus (Nocardia opaca) protein is Catechol 1,2-dioxygenase (catA).